A 29-amino-acid chain; its full sequence is Cytochrome b6-f complex subunit 8 (29 aa).

A helical membrane pass occupies residues 3 to 23 (ILALGWVSVLALFTWSIAMVV).

Belongs to the PetN family. The 4 large subunits of the cytochrome b6-f complex are cytochrome b6, subunit IV (17 kDa polypeptide, PetD), cytochrome f and the Rieske protein, while the 4 small subunits are PetG, PetL, PetM and PetN. The complex functions as a dimer.

The protein localises to the cellular thylakoid membrane. Functionally, component of the cytochrome b6-f complex, which mediates electron transfer between photosystem II (PSII) and photosystem I (PSI), cyclic electron flow around PSI, and state transitions. In Gloeothece citriformis (strain PCC 7424) (Cyanothece sp. (strain PCC 7424)), this protein is Cytochrome b6-f complex subunit 8.